The chain runs to 692 residues: Proprotein convertase subtilisin/kexin type 9 (692 aa).

The N-terminal stretch at Met-1 to Ala-30 is a signal peptide. A propeptide spanning residues Gln-31–Gln-152 is cleaved from the precursor. Tyr-38 carries the sulfotyrosine modification. Ser-47 is modified (phosphoserine). In terms of domain architecture, Inhibitor I9 spans Thr-77–Val-149. The Peptidase S8 domain maps to Pro-155 to Leu-444. Active-site charge relay system residues include Asp-186 and His-226. Disulfide bonds link Cys-223-Cys-255 and Cys-323-Cys-358. Ser-386 serves as the catalytic Charge relay system. A C-terminal domain region spans residues Arg-450–Gln-692. 3 disulfides stabilise this stretch: Cys-457-Cys-527, Cys-477-Cys-526, and Cys-486-Cys-509. Residue Asn-533 is glycosylated (N-linked (GlcNAc...) asparagine). 6 disulfide bridges follow: Cys-534–Cys-601, Cys-552–Cys-600, Cys-562–Cys-588, Cys-608–Cys-679, Cys-626–Cys-678, and Cys-635–Cys-654. Ser-688 is modified (phosphoserine).

This sequence belongs to the peptidase S8 family. As to quaternary structure, monomer. Can self-associate to form dimers and higher multimers which may have increased LDLR degrading activity. The precursor protein but not the mature protein may form multimers. Interacts with APOB, VLDLR, LRP8/APOER2 and BACE1. The full-length immature form (pro-PCSK9) interacts with SCNN1A, SCNN1B and SCNN1G. The pro-PCSK9 form (via C-terminal domain) interacts with LDLR. Interacts (via the C-terminal domain) with ANXA2 (via repeat Annexin 1); the interaction inhibits the degradation of LDLR. Ca(2+) serves as cofactor. In terms of processing, cleavage by furin and PCSK5 generates a truncated inactive protein that is unable to induce LDLR degradation. Post-translationally, undergoes autocatalytic cleavage in the endoplasmic reticulum to release the propeptide from the N-terminus and the cleavage of the propeptide is strictly required for its maturation and activation. The cleaved propeptide however remains associated with the catalytic domain through non-covalent interactions, preventing potential substrates from accessing its active site. As a result, it is secreted from cells as a propeptide-containing, enzymatically inactive protein. Phosphorylation protects the propeptide against proteolysis.

The protein localises to the cytoplasm. The protein resides in the secreted. It localises to the endosome. Its subcellular location is the lysosome. It is found in the cell surface. The protein localises to the endoplasmic reticulum. The protein resides in the golgi apparatus. Its proteolytic activity is autoinhibited by the non-covalent binding of the propeptide to the catalytic domain. Inhibited by EGTA. Its function is as follows. Crucial player in the regulation of plasma cholesterol homeostasis. Binds to low-density lipid receptor family members: low density lipoprotein receptor (LDLR), very low density lipoprotein receptor (VLDLR), apolipoprotein E receptor (LRP1/APOER) and apolipoprotein receptor 2 (LRP8/APOER2), and promotes their degradation in intracellular acidic compartments. Acts via a non-proteolytic mechanism to enhance the degradation of the hepatic LDLR through a clathrin LDLRAP1/ARH-mediated pathway. May prevent the recycling of LDLR from endosomes to the cell surface or direct it to lysosomes for degradation. Can induce ubiquitination of LDLR leading to its subsequent degradation. Inhibits intracellular degradation of APOB via the autophagosome/lysosome pathway in a LDLR-independent manner. Involved in the disposal of non-acetylated intermediates of BACE1 in the early secretory pathway. Inhibits epithelial Na(+) channel (ENaC)-mediated Na(+) absorption by reducing ENaC surface expression primarily by increasing its proteasomal degradation. Regulates neuronal apoptosis via modulation of LRP8/APOER2 levels and related anti-apoptotic signaling pathways. The protein is Proprotein convertase subtilisin/kexin type 9 (PCSK9) of Macaca nemestrina (Pig-tailed macaque).